Here is a 431-residue protein sequence, read N- to C-terminus: Adenylosuccinate lyase (431 aa).

N(6)-(1,2-dicarboxyethyl)-AMP contacts are provided by residues 4–5 (RY), 67–69 (RHD), and 93–94 (TS). Histidine 141 serves as the catalytic Proton donor/acceptor. Glutamine 212 serves as a coordination point for N(6)-(1,2-dicarboxyethyl)-AMP. The active-site Proton donor/acceptor is the serine 262. N(6)-(1,2-dicarboxyethyl)-AMP contacts are provided by residues serine 263, 268–270 (KRN), asparagine 276, and 307–311 (SAERI).

The protein belongs to the lyase 1 family. Adenylosuccinate lyase subfamily. Homodimer and homotetramer. Residues from neighboring subunits contribute catalytic and substrate-binding residues to each active site.

It carries out the reaction N(6)-(1,2-dicarboxyethyl)-AMP = fumarate + AMP. It catalyses the reaction (2S)-2-[5-amino-1-(5-phospho-beta-D-ribosyl)imidazole-4-carboxamido]succinate = 5-amino-1-(5-phospho-beta-D-ribosyl)imidazole-4-carboxamide + fumarate. Its pathway is purine metabolism; AMP biosynthesis via de novo pathway; AMP from IMP: step 2/2. It participates in purine metabolism; IMP biosynthesis via de novo pathway; 5-amino-1-(5-phospho-D-ribosyl)imidazole-4-carboxamide from 5-amino-1-(5-phospho-D-ribosyl)imidazole-4-carboxylate: step 2/2. In terms of biological role, catalyzes two reactions in de novo purine nucleotide biosynthesis. Catalyzes the breakdown of 5-aminoimidazole- (N-succinylocarboxamide) ribotide (SAICAR or 2-[5-amino-1-(5-phospho-beta-D-ribosyl)imidazole-4-carboxamido]succinate) to 5-aminoimidazole-4-carboxamide ribotide (AICAR or 5-amino-1-(5-phospho-beta-D-ribosyl)imidazole-4-carboxamide) and fumarate, and of adenylosuccinate (ADS or N(6)-(1,2-dicarboxyethyl)-AMP) to adenosine monophosphate (AMP) and fumarate. In Staphylococcus epidermidis (strain ATCC 35984 / DSM 28319 / BCRC 17069 / CCUG 31568 / BM 3577 / RP62A), this protein is Adenylosuccinate lyase (purB).